Consider the following 397-residue polypeptide: MDLLAPLAAVILTYREVDADTLGRVGEEMKKCIEILGVKRPMFVLHTCGRVEAYLYNASEEEINSVTLRYRRYAESIRVVRGVEAARHLFRVAAGLESMLIGETDILGQVEEAFDRQVKAGFTKGLLKTIVERAIRAGKRVRAETGISRGPAGLGSLSIIYVSQLLDLTKSKVAVLGAGAVGAGLAKELAERGVAKLYILNRTLEKAVEIANKLGAEARPLTREEVQKCLMECDVVFSSVHSLEYVIDRVPDGAVVKIIVDLGVPQTVAPGLPVRVVRLSDLKQLAEKYSEARKQEAARAEAIVEEELAKLPQILARRYIEEAVSHLLEKAMEVAEEEGKRAGCPTAVLAARTTVKRTLFPIIEVLKKMAEDGRLEDAVKVVEILRSQKPLLRQSEE.

Substrate-binding positions include 47–50 (TCGR), serine 98, 103–105 (ETD), and glutamine 109. The active-site Nucleophile is cysteine 48. 177–182 (GAGAVG) provides a ligand contact to NADP(+).

It belongs to the glutamyl-tRNA reductase family. Homodimer.

The catalysed reaction is (S)-4-amino-5-oxopentanoate + tRNA(Glu) + NADP(+) = L-glutamyl-tRNA(Glu) + NADPH + H(+). It participates in porphyrin-containing compound metabolism; protoporphyrin-IX biosynthesis; 5-aminolevulinate from L-glutamyl-tRNA(Glu): step 1/2. In terms of biological role, catalyzes the NADPH-dependent reduction of glutamyl-tRNA(Glu) to glutamate 1-semialdehyde (GSA). The sequence is that of Glutamyl-tRNA reductase from Pyrobaculum aerophilum (strain ATCC 51768 / DSM 7523 / JCM 9630 / CIP 104966 / NBRC 100827 / IM2).